We begin with the raw amino-acid sequence, 252 residues long: Putative phosphonates utilization ATP-binding protein PhnK (252 aa).

The ABC transporter domain occupies 6 to 246; that stretch reads LSVNNLTHLY…PHHPYTQLLV (241 aa). 38-45 is an ATP binding site; that stretch reads GESGSGKT.

It belongs to the ABC transporter superfamily. As to quaternary structure, forms a complex with PhnG, PhnH, PhnI and PhnJ with the suggested composition PhnG(4)H(2)I(2)J(2)K.

Its function is as follows. Belongs to an operon involved in alkylphosphonate uptake and C-P lyase. Exact function not known. PhnK is not required for the ribophosphonate triphosphate (RPnTP) synthase reaction. This chain is Putative phosphonates utilization ATP-binding protein PhnK (phnK), found in Escherichia coli (strain K12).